The sequence spans 183 residues: Ferredoxin-2, mitochondrial (183 aa).

The transit peptide at 1 to 52 (MAASMARGGVSARVLLQAARGTWWNRPGGTSGSGEGVALGTTRKFQATGSRP) directs the protein to the mitochondrion. Residues 45-65 (FQATGSRPAGEEDAGGPERPG) are disordered. The 2Fe-2S ferredoxin-type domain maps to 68-170 (VNVVFVDRSG…GAEFTLPKIT (103 aa)). C105, C111, C114, and C151 together coordinate [2Fe-2S] cluster.

Belongs to the adrenodoxin/putidaredoxin family. Component of the mitochondrial core iron-sulfur cluster (ISC) complex composed of NFS1, LYRM4, NDUFAB1, ISCU, FXN, and FDX2; this complex is a heterohexamer containing two copies of each monomer. Form a heterodimer complex with NFS1. Interacts (in both their reduced and oxidized states) with the cysteine desulfurase complex; this interaction stimulates cysteine desulfurase activity, and serves as a reductant for Fe-S cluster assembly. [2Fe-2S] cluster serves as cofactor. In terms of tissue distribution, widely expressed, with highest levels in testis, kidney and brain (at protein level). Expressed in muscle (at protein level). Expressed in fibroblasts (at protein level).

It localises to the mitochondrion. The protein localises to the mitochondrion matrix. Electron donor, of the core iron-sulfur cluster (ISC) assembly complex, that acts to reduce the persulfide into sulfide during [2Fe-2S] clusters assembly on the scaffolding protein ISCU. The core iron-sulfur cluster (ISC) assembly complex is involved in the de novo synthesis of a [2Fe-2S] cluster, the first step of the mitochondrial iron-sulfur protein biogenesis. This process is initiated by the cysteine desulfurase complex (NFS1:LYRM4:NDUFAB1) that produces persulfide which is delivered on the scaffold protein ISCU in a FXN-dependent manner. Then this complex is stabilized by FDX2 which provides reducing equivalents to accomplish the [2Fe-2S] cluster assembly. Finally, the [2Fe-2S] cluster is transferred from ISCU to chaperone proteins, including HSCB, HSPA9 and GLRX5. Essential for coenzyme Q biosynthesis: together with FDXR, transfers the electrons required for the hydroxylation reaction performed by COQ6. The chain is Ferredoxin-2, mitochondrial from Homo sapiens (Human).